A 104-amino-acid polypeptide reads, in one-letter code: Large ribosomal subunit protein bL21 (104 aa).

This sequence belongs to the bacterial ribosomal protein bL21 family. As to quaternary structure, part of the 50S ribosomal subunit. Contacts protein L20.

This protein binds to 23S rRNA in the presence of protein L20. This chain is Large ribosomal subunit protein bL21, found in Granulibacter bethesdensis (strain ATCC BAA-1260 / CGDNIH1).